We begin with the raw amino-acid sequence, 100 residues long: NADH-quinone oxidoreductase subunit K (100 aa).

Helical transmembrane passes span 4-24 (LQHGLILAAILFILGLTGLVI), 28-48 (LLFMLIGLEIMINASALAFVV), and 60-80 (VMYILAISLAAAEASIGLALL).

This sequence belongs to the complex I subunit 4L family. NDH-1 is composed of 13 different subunits. Subunits NuoA, H, J, K, L, M, N constitute the membrane sector of the complex.

The protein localises to the cell inner membrane. It catalyses the reaction a quinone + NADH + 5 H(+)(in) = a quinol + NAD(+) + 4 H(+)(out). Its function is as follows. NDH-1 shuttles electrons from NADH, via FMN and iron-sulfur (Fe-S) centers, to quinones in the respiratory chain. The immediate electron acceptor for the enzyme in this species is believed to be ubiquinone. Couples the redox reaction to proton translocation (for every two electrons transferred, four hydrogen ions are translocated across the cytoplasmic membrane), and thus conserves the redox energy in a proton gradient. This Shigella sonnei (strain Ss046) protein is NADH-quinone oxidoreductase subunit K.